A 246-amino-acid chain; its full sequence is Heavy metal-associated isoprenylated plant protein 8 (246 aa).

Residues 1-31 form a disordered region; sequence MGKNKQNGESDNKSEKKNQKNGDSSVDKSDK. Positions 35–99 constitute an HMA 1 domain; that stretch reads CKEIVLKVYM…RVQKKFSRNA (65 aa). Residues C46 and C49 each contribute to the a metal cation site. The interval 96-122 is disordered; sequence SRNAEMISPKHNPKQDQKEPQQKKESA. A compositionally biased stretch (basic and acidic residues) spans 108-122; the sequence is PKQDQKEPQQKKESA. One can recognise an HMA 2 domain in the interval 125-189; the sequence is IKTAILRMNM…IKKKLGKHAE (65 aa). 2 residues coordinate a metal cation: C136 and C139. The segment at 191-226 is disordered; sequence LSQITEKGKDNNKKNNNKKEESDGNKIFSYPPQYSS. Residues 196–214 show a composition bias toward basic and acidic residues; that stretch reads EKGKDNNKKNNNKKEESDG. C243 carries the cysteine methyl ester modification. C243 carries the S-farnesyl cysteine lipid modification. The propeptide at 244–246 is removed in mature form; the sequence is SIM.

This sequence belongs to the HIPP family.

Heavy-metal-binding protein. This Arabidopsis thaliana (Mouse-ear cress) protein is Heavy metal-associated isoprenylated plant protein 8.